The primary structure comprises 338 residues: Citramalyl-CoA lyase, mitochondrial (338 aa).

Residues 1-20 (MALCVLRNTVRGAAALPRLK) constitute a mitochondrion transit peptide. The substrate site is built by Y48, K55, and K59. 3 positions are modified to N6-acetyllysine: K55, K59, and K64. 2 positions are modified to N6-acetyllysine; alternate: K80 and K90. Residues K80 and K90 each carry the N6-succinyllysine; alternate modification. R105 contacts substrate. Mg(2+) is bound by residues E169 and D204. 270-271 (IH) contributes to the substrate binding site. Position 307 is an N6-succinyllysine (K307). D318 is a catalytic residue.

The protein belongs to the HpcH/HpaI aldolase family. Citrate lyase beta subunit-like subfamily. Homotrimer. Mg(2+) is required as a cofactor. As to expression, detected in brown fat, brain, liver, kidney, heart, skeletal muscle and ovary (at protein level).

It localises to the mitochondrion. The catalysed reaction is glyoxylate + acetyl-CoA + H2O = (S)-malate + CoA + H(+). It carries out the reaction propanoyl-CoA + glyoxylate + H2O = 3-methylmalate + CoA + H(+). The enzyme catalyses (3S)-citramalyl-CoA = pyruvate + acetyl-CoA. It catalyses the reaction (S)-malyl-CoA + H2O = (S)-malate + CoA + H(+). Functionally, mitochondrial citramalyl-CoA lyase indirectly involved in the vitamin B12 metabolism. Converts citramalyl-CoA into acetyl-CoA and pyruvate in the C5-dicarboxylate catabolism pathway. The C5-dicarboxylate catabolism pathway is required to detoxify itaconate, a vitamin B12-poisoning metabolite. Also acts as a malate synthase in vitro, converting glyoxylate and acetyl-CoA to malate. Also displays malyl-CoA thioesterase activity. Also acts as a beta-methylmalate synthase in vitro, by mediating conversion of glyoxylate and propionyl-CoA to beta-methylmalate. Also has very weak citramalate synthase activity in vitro. In Mus musculus (Mouse), this protein is Citramalyl-CoA lyase, mitochondrial.